The chain runs to 287 residues: 4-hydroxybenzoate octaprenyltransferase (287 aa).

9 helical membrane passes run 20–40, 43–63, 94–114, 115–135, 137–157, 159–179, 210–230, 235–255, and 266–286; these read IGSLLLLWPTLWALFLAADGL, MHVLVVFVLGVVFMRAAGCVI, LGLFGLLVLVSFVLVLTMNTL, TIMLSVVGLVLAAAYPFMKRY, HLPQLVLGMAFGWSIPMAYAA, AGELPVVAWLLFTANILWTIA, IIIGVLQLSTLVTMILIGHSL, IYYWFLLMASGLFVYQQRLIG, and FLNNNYVGMLIFLGIAISVMM.

Belongs to the UbiA prenyltransferase family. Mg(2+) serves as cofactor.

The protein resides in the cell inner membrane. The enzyme catalyses all-trans-octaprenyl diphosphate + 4-hydroxybenzoate = 4-hydroxy-3-(all-trans-octaprenyl)benzoate + diphosphate. Its pathway is cofactor biosynthesis; ubiquinone biosynthesis. Its function is as follows. Catalyzes the prenylation of para-hydroxybenzoate (PHB) with an all-trans polyprenyl group. Mediates the second step in the final reaction sequence of ubiquinone-8 (UQ-8) biosynthesis, which is the condensation of the polyisoprenoid side chain with PHB, generating the first membrane-bound Q intermediate 3-octaprenyl-4-hydroxybenzoate. The protein is 4-hydroxybenzoate octaprenyltransferase of Photobacterium profundum (strain SS9).